Reading from the N-terminus, the 78-residue chain is Exodeoxyribonuclease 7 small subunit (78 aa).

The protein belongs to the XseB family. In terms of assembly, heterooligomer composed of large and small subunits.

The protein localises to the cytoplasm. The enzyme catalyses Exonucleolytic cleavage in either 5'- to 3'- or 3'- to 5'-direction to yield nucleoside 5'-phosphates.. In terms of biological role, bidirectionally degrades single-stranded DNA into large acid-insoluble oligonucleotides, which are then degraded further into small acid-soluble oligonucleotides. The chain is Exodeoxyribonuclease 7 small subunit from Synechococcus sp. (strain JA-3-3Ab) (Cyanobacteria bacterium Yellowstone A-Prime).